The primary structure comprises 171 residues: Shikimate kinase (171 aa).

11 to 16 (GTGKTT) is a binding site for ATP. A Mg(2+)-binding site is contributed by threonine 15. Aspartate 33, arginine 57, and glycine 79 together coordinate substrate. Arginine 117 provides a ligand contact to ATP. Arginine 136 is a substrate binding site.

This sequence belongs to the shikimate kinase family. In terms of assembly, monomer. Requires Mg(2+) as cofactor.

It is found in the cytoplasm. It catalyses the reaction shikimate + ATP = 3-phosphoshikimate + ADP + H(+). The protein operates within metabolic intermediate biosynthesis; chorismate biosynthesis; chorismate from D-erythrose 4-phosphate and phosphoenolpyruvate: step 5/7. Catalyzes the specific phosphorylation of the 3-hydroxyl group of shikimic acid using ATP as a cosubstrate. The polypeptide is Shikimate kinase (Caldanaerobacter subterraneus subsp. tengcongensis (strain DSM 15242 / JCM 11007 / NBRC 100824 / MB4) (Thermoanaerobacter tengcongensis)).